Reading from the N-terminus, the 131-residue chain is Small ribosomal subunit protein uS8 (131 aa).

It belongs to the universal ribosomal protein uS8 family. As to quaternary structure, part of the 30S ribosomal subunit. Contacts proteins S5 and S12.

Its function is as follows. One of the primary rRNA binding proteins, it binds directly to 16S rRNA central domain where it helps coordinate assembly of the platform of the 30S subunit. The chain is Small ribosomal subunit protein uS8 from Paraburkholderia phymatum (strain DSM 17167 / CIP 108236 / LMG 21445 / STM815) (Burkholderia phymatum).